Here is a 453-residue protein sequence, read N- to C-terminus: Phosphoglucosamine mutase (453 aa).

The active-site Phosphoserine intermediate is the Ser105. Mg(2+)-binding residues include Ser105, Asp244, Asp246, and Asp248. Phosphoserine is present on Ser105.

It belongs to the phosphohexose mutase family. Mg(2+) is required as a cofactor. In terms of processing, activated by phosphorylation.

The enzyme catalyses alpha-D-glucosamine 1-phosphate = D-glucosamine 6-phosphate. In terms of biological role, catalyzes the conversion of glucosamine-6-phosphate to glucosamine-1-phosphate. The chain is Phosphoglucosamine mutase from Blochmanniella pennsylvanica (strain BPEN).